The following is a 950-amino-acid chain: Double-stranded RNA-binding protein Staufen homolog (950 aa).

Disordered regions lie at residues 25 to 168 (VSGA…QQQQ), 202 to 274 (QQQL…QPST), and 288 to 342 (VTPV…NTKE). Positions 31-43 (QQRSMMSQQRGGS) are enriched in low complexity. A compositionally biased stretch (polar residues) spans 45–66 (AINSSKSPYQLQTSSISQFSHL). Low complexity predominate over residues 67–77 (QQQQQQQQQQQ). Polar residues predominate over residues 78–122 (LVNNYHKQKQMSPDITSHQFSSSTGGGMPTQNGNYQSMSGSSIHT). Low complexity-rich tracts occupy residues 130–143 (QLSL…YSSQ), 153–168 (QQHH…QQQQ), and 202–253 (QQQL…ILQH). The span at 254–274 (SPTSGKSLSSAPHGTSVQPST) shows a compositional bias: polar residues. Residues 313-322 (SGRDSVHVSD) are compositionally biased toward basic and acidic residues. 4 DRBM domains span residues 344–411 (TPMC…ETKC), 435–546 (TPTV…ILKN), 578–645 (SEIS…ELRK), and 690–758 (NPIS…LLGY). 2 disordered regions span residues 758–833 (YTKP…HTAS) and 922–950 (DIHP…DFSK). The span at 765–782 (PTKSSFKNPSTGEAGQTN) shows a compositional bias: polar residues. A compositionally biased stretch (basic and acidic residues) spans 922-937 (DIHPGGDGPQVKKDVL).

Strongly expressed in nervous tissue (at protein level).

It localises to the perikaryon. Its subcellular location is the cell projection. Its function is as follows. RNA-binding protein which is required for syntaxin location in sensory neurons during long-term synaptic facilitation. Binds to syntaxin mRNA and is required to maintain its accumulation at the axon hillock following neuronal stimulation and at the opposite pole in stable unstimulated sensory neurons. This is Double-stranded RNA-binding protein Staufen homolog from Aplysia californica (California sea hare).